The primary structure comprises 138 residues: MSEQPYYETMYILRPDIPEEEVDSHLKKYSEILEKSETEVLDSQMRGKRRLAYPIAKHKEGIYVQLSHKGNGQQVATLERAMRLSEDVIRYITVKQDGPLPTPKPTSKENEPEKEEVKPTEEKTESPSKDEKKEDSKE.

The disordered stretch occupies residues 94–138; that stretch reads VKQDGPLPTPKPTSKENEPEKEEVKPTEEKTESPSKDEKKEDSKE. The span at 106–138 shows a compositional bias: basic and acidic residues; sequence TSKENEPEKEEVKPTEEKTESPSKDEKKEDSKE.

Belongs to the bacterial ribosomal protein bS6 family.

Binds together with bS18 to 16S ribosomal RNA. The polypeptide is Small ribosomal subunit protein bS6 (Prochlorococcus marinus (strain NATL2A)).